We begin with the raw amino-acid sequence, 518 residues long: Reduced folate transporter (518 aa).

The residue at position 1 (Met-1) is an N-acetylmethionine. The Cytoplasmic segment spans residues Met-1–Val-29. Residues Phe-30–Pro-50 traverse the membrane as a helical segment. Residues Ile-48 and Thr-49 each coordinate folate. The Extracellular segment spans residues Tyr-51–Val-62. The N-linked (GlcNAc...) asparagine glycan is linked to Asn-56. A helical membrane pass occupies residues Thr-63–Thr-85. Over Asp-86 to Arg-89 the chain is Cytoplasmic. Residues Tyr-90–Leu-110 traverse the membrane as a helical segment. Over Gly-111 to Val-114 the chain is Extracellular. The helical transmembrane segment at Val-115–Tyr-137 threads the bilayer. 2 residues coordinate folate: Glu-121 and Arg-131. Residues Ile-138 to Ala-151 are Cytoplasmic-facing. A helical transmembrane segment spans residues Ser-152–Glu-176. Val-162 lines the folate pocket. The Extracellular segment spans residues Gln-177–Asn-181. Residues Ser-182–Ser-200 form a helical membrane-spanning segment. The Cytoplasmic segment spans residues Leu-201–Gln-266. The chain crosses the membrane as a helical span at residues Pro-267–Val-292. 3 residues coordinate folate: Ala-281, Gly-282, and Ile-286. Topologically, residues Leu-293–Leu-300 are extracellular. The chain crosses the membrane as a helical span at residues Asn-301–Phe-323. The Cytoplasmic portion of the chain corresponds to Val-324–Ala-329. The chain crosses the membrane as a helical span at residues Leu-330–Met-350. Residues Tyr-351–Val-353 lie on the Extracellular side of the membrane. A helical transmembrane segment spans residues His-354–Gln-377. Residues Tyr-366 and Val-370 each contribute to the folate site. The Cytoplasmic portion of the chain corresponds to Phe-378–Leu-391. A helical transmembrane segment spans residues Ser-392–Thr-415. A required for substrate-binding region spans residues Ala-407–Ser-419. The Extracellular portion of the chain corresponds to Leu-416–Gly-423. A helical membrane pass occupies residues Leu-424–Val-448. The Cytoplasmic portion of the chain corresponds to Gly-449 to Leu-512. Ser-473, Ser-478, and Ser-483 each carry phosphoserine. The tract at residues Gln-480 to Ala-518 is disordered.

It belongs to the reduced folate carrier (RFC) transporter (TC 2.A.48) family.

The protein localises to the cell membrane. It is found in the apical cell membrane. The protein resides in the basolateral cell membrane. The enzyme catalyses 5-amino-1-(5-phospho-beta-D-ribosyl)imidazole-4-carboxamide(in) + (6S)-5-methyl-5,6,7,8-tetrahydrofolate(out) = 5-amino-1-(5-phospho-beta-D-ribosyl)imidazole-4-carboxamide(out) + (6S)-5-methyl-5,6,7,8-tetrahydrofolate(in). Antiporter that mediates the import of reduced folates, driven by the export of organic anions. Also acts as an importer of immunoreactive cyclic dinucleotides, but with a lower transporter activity. Mechanistically, acts as a secondary active transporter, which exports intracellular organic anions down their concentration gradients to facilitate the uptake of its substrates. Has high affinity for N5-methyltetrahydrofolate, the predominant circulating form of folate. Also mediates the import of antifolate drug methotrexate. 5-amino-4-imidazolecarboxamide riboside (AICAR), when phosphorylated to AICAR monophosphate, can serve as an organic anion for antiporter activity. The sequence is that of Reduced folate transporter from Cricetulus griseus (Chinese hamster).